Here is a 517-residue protein sequence, read N- to C-terminus: Dopamine receptor 4 (517 aa).

The Extracellular portion of the chain corresponds to 1–46 (MLAYGSDPNAEDLYITMTPSVSTENDTTVWATEEPAAIVWRHPLLA). Asn25 carries N-linked (GlcNAc...) asparagine glycosylation. Residues 47-67 (IALFSICLLTVAGNCLVVIAV) traverse the membrane as a helical segment. Residues 68–77 (CTKKYLRNPT) lie on the Cytoplasmic side of the membrane. A helical transmembrane segment spans residues 78 to 98 (GYLIISLAIADLIVGVIVMPM). Residues 99 to 108 (NSLFEIANHT) are Extracellular-facing. An N-linked (GlcNAc...) asparagine glycan is attached at Asn106. The helical transmembrane segment at 109-129 (WLFGLMMCDVFHAMDILASTA) threads the bilayer. Residues 130 to 159 (SIWNLCVISLDRYMAGQDPIGYRDKVSKRR) lie on the Cytoplasmic side of the membrane. Residues 160–180 (ILMAILSVWVLSAILSFPGII) traverse the membrane as a helical segment. Residues 181 to 209 (WWRTSSPHLYEDQSQCLFTDSKMYVSFSS) lie on the Extracellular side of the membrane. The helical transmembrane segment at 210-230 (LVSFYIPLFLILFAYGKVYII) threads the bilayer. At 231–409 (ATRHSKGMRM…YVHEQRAART (179 aa)) the chain is on the cytoplasmic side. The disordered stretch occupies residues 309–339 (NDRGEHNNNNTVRQPLLRGTEGCHSDSISRS). Residues 410–430 (LSIVVGAFILCWTPFFVFTPL) traverse the membrane as a helical segment. Over 431–442 (TAFCESCFSNKE) the chain is Extracellular. The helical transmembrane segment at 443–463 (TIFTFVTWAGHLNSMLNPLIY) threads the bilayer. At 464–517 (SRFSRDFRRAFKQILTCQRQQKVKTAFKTPLSLVFTQLISVTQMWEQPPNTSIE) the chain is on the cytoplasmic side.

This sequence belongs to the G-protein coupled receptor 1 family. In terms of tissue distribution, expressed in pharyngeal neurons I1 and I2, neurons ASG, AVL, CAN, PQR, vulva, intestine, rectal glands and rectal epithelial glands. Also expressed in neurons in ray 8 in males.

Its subcellular location is the cell membrane. Receptor for dopamine. The activity of this receptor is mediated by G proteins which activate adenylyl cyclase. In terms of antagonist responses, would be classed with the D1-like dopamine receptor group. The chain is Dopamine receptor 4 (dop-4) from Caenorhabditis elegans.